The chain runs to 427 residues: Fc receptor-like B (427 aa).

The signal sequence occupies residues 1 to 17 (MWMLAALLLLVPRSGKA). Ig-like C2-type domains are found at residues 23 to 101 (PVLT…LSVS) and 103 to 189 (DWLI…VAVT). Disulfide bonds link cysteine 44–cysteine 85 and cysteine 124–cysteine 168. N-linked (GlcNAc...) asparagine glycosylation is present at asparagine 152. Polar residues predominate over residues 401 to 418 (TPETPNSHVTVNPATPET). The segment at 401-427 (TPETPNSHVTVNPATPETTVMEGRVDS) is disordered.

As to expression, expressed at low levels. Expressed in B-lymphocytes. Detected in spleen, lymph node, kidney, lung and brain.

Its subcellular location is the cytoplasm. The protein resides in the endoplasmic reticulum. In Mus musculus (Mouse), this protein is Fc receptor-like B (Fcrlb).